We begin with the raw amino-acid sequence, 415 residues long: WD-40 repeat-containing protein MSI2 (415 aa).

WD repeat units lie at residues 166 to 206 (GHDK…QDKV), 215 to 255 (GHES…MQHQ), 258 to 298 (VHER…APLH), 302 to 342 (SHEG…EEQL), and 361 to 401 (GHKA…YRDE). The short motif at 232-248 (LFGSAGEDGRLVIWDTR) is the DWD box element.

This sequence belongs to the WD repeat RBAP46/RBAP48/MSI1 family.

The protein localises to the nucleus. Its function is as follows. Core histone-binding subunit that may target chromatin assembly factors, chromatin remodeling factors and histone deacetylases to their histone substrates in a manner that is regulated by nucleosomal DNA. The chain is WD-40 repeat-containing protein MSI2 (MSI2) from Arabidopsis thaliana (Mouse-ear cress).